The primary structure comprises 322 residues: Olfactory receptor 1J1 (322 aa).

The Extracellular portion of the chain corresponds to 1-25; it reads MSPENQSSVSEFLLLGLPIRPEQQA. Residue asparagine 5 is glycosylated (N-linked (GlcNAc...) asparagine). The chain crosses the membrane as a helical span at residues 26–49; the sequence is VFFALFLGMYLTTVLGNLLIMLLI. Residues 50–57 lie on the Cytoplasmic side of the membrane; the sequence is QLDSHLHT. Residues 58 to 79 traverse the membrane as a helical segment; that stretch reads PMYFFLSHLALTDISFSSVTVP. Residues 80 to 100 lie on the Extracellular side of the membrane; that stretch reads KMLMNMQTQHLAVFYKGCISQ. The cysteines at positions 97 and 189 are disulfide-linked. A helical membrane pass occupies residues 101–120; that stretch reads TYFFIFFADLDSFLITSMAY. The Cytoplasmic segment spans residues 121–139; it reads DRYVAICHPLHYATIMTQS. A helical membrane pass occupies residues 140 to 158; that stretch reads QCVMLVAGSWVIACACALL. The Extracellular segment spans residues 159 to 196; it reads HTLLLAQLSFCADHIIPHYFCDLGALLKLSCSDTSLNQ. A helical membrane pass occupies residues 197–219; it reads LAIFTAALTAIMLPFLCILVSYG. Residues 220–236 lie on the Cytoplasmic side of the membrane; that stretch reads HIGVTILQIPSTKGICK. A helical transmembrane segment spans residues 237–259; it reads ALSTCGSHLSVVTIYYRTIIGLY. The Extracellular segment spans residues 260–272; it reads FLPPSSNTNDKNI. Residues 273–292 form a helical membrane-spanning segment; that stretch reads IASVIYTAVTPMLNPFIYSL. At 293 to 322 the chain is on the cytoplasmic side; the sequence is RNKDIKGALRKLLSRSGAVAHACNLNTLGG.

This sequence belongs to the G-protein coupled receptor 1 family.

It localises to the cell membrane. In terms of biological role, odorant receptor. In Homo sapiens (Human), this protein is Olfactory receptor 1J1.